The primary structure comprises 65 residues: Putative primary metabolism protein prl65 (65 aa).

The disordered stretch occupies residues 1–25 (MTKYSKGNKVEYHPIGGPSGTSTST).

In terms of biological role, may play a role in primary metabolism. This Schizosaccharomyces pombe (strain 972 / ATCC 24843) (Fission yeast) protein is Putative primary metabolism protein prl65.